A 159-amino-acid chain; its full sequence is Cyclic pyranopterin monophosphate synthase (159 aa).

Substrate-binding positions include 75–77 (LCH) and 113–114 (ME). Aspartate 128 is a catalytic residue.

Belongs to the MoaC family. As to quaternary structure, homohexamer; trimer of dimers.

The enzyme catalyses (8S)-3',8-cyclo-7,8-dihydroguanosine 5'-triphosphate = cyclic pyranopterin phosphate + diphosphate. It functions in the pathway cofactor biosynthesis; molybdopterin biosynthesis. Catalyzes the conversion of (8S)-3',8-cyclo-7,8-dihydroguanosine 5'-triphosphate to cyclic pyranopterin monophosphate (cPMP). The chain is Cyclic pyranopterin monophosphate synthase from Vibrio vulnificus (strain YJ016).